Reading from the N-terminus, the 92-residue chain is Large ribosomal subunit protein eL43z (92 aa).

The segment at 39-60 adopts a C4-type zinc-finger fold; the sequence is CEFCGKFAVKRKAVGIWGCKDC.

It belongs to the eukaryotic ribosomal protein eL43 family.

This is Large ribosomal subunit protein eL43z from Oryza sativa subsp. japonica (Rice).